A 160-amino-acid chain; its full sequence is Regulatory protein RecX (160 aa).

The protein belongs to the RecX family.

The protein localises to the cytoplasm. Functionally, modulates RecA activity. This is Regulatory protein RecX from Pelodictyon phaeoclathratiforme (strain DSM 5477 / BU-1).